Here is a 431-residue protein sequence, read N- to C-terminus: Signal recognition particle 54 kDa protein (431 aa).

Residues 105-112, 185-189, and 243-246 each bind GTP; these read GVEGSGKT, DTAGR, and TKMD.

This sequence belongs to the GTP-binding SRP family. SRP54 subfamily. In terms of assembly, part of the signal recognition particle protein translocation system, which is composed of SRP and FtsY. Archaeal SRP consists of a 7S RNA molecule of 300 nucleotides and two protein subunits: SRP54 and SRP19.

Its subcellular location is the cytoplasm. The enzyme catalyses GTP + H2O = GDP + phosphate + H(+). Its function is as follows. Involved in targeting and insertion of nascent membrane proteins into the cytoplasmic membrane. Binds to the hydrophobic signal sequence of the ribosome-nascent chain (RNC) as it emerges from the ribosomes. The SRP-RNC complex is then targeted to the cytoplasmic membrane where it interacts with the SRP receptor FtsY. The chain is Signal recognition particle 54 kDa protein from Pyrobaculum calidifontis (strain DSM 21063 / JCM 11548 / VA1).